A 171-amino-acid polypeptide reads, in one-letter code: Large ribosomal subunit protein uL10 (171 aa).

Belongs to the universal ribosomal protein uL10 family. As to quaternary structure, part of the ribosomal stalk of the 50S ribosomal subunit. The N-terminus interacts with L11 and the large rRNA to form the base of the stalk. The C-terminus forms an elongated spine to which L12 dimers bind in a sequential fashion forming a multimeric L10(L12)X complex.

Forms part of the ribosomal stalk, playing a central role in the interaction of the ribosome with GTP-bound translation factors. This Hyphomonas neptunium (strain ATCC 15444) protein is Large ribosomal subunit protein uL10.